The following is a 442-amino-acid chain: tRNA-2-methylthio-N(6)-dimethylallyladenosine synthase (442 aa).

Positions 6–122 (RKFYIHTFGC…LPVLIAEAGK (117 aa)) constitute an MTTase N-terminal domain. Residues Cys-15, Cys-51, Cys-85, Cys-157, Cys-161, and Cys-164 each contribute to the [4Fe-4S] cluster site. One can recognise a Radical SAM core domain in the interval 143 to 373 (RTQSLTAFVP…IDLQNGISAE (231 aa)). In terms of domain architecture, TRAM spans 376–439 (RLAIGSVVEV…SATLIGRAAE (64 aa)).

The protein belongs to the methylthiotransferase family. MiaB subfamily. As to quaternary structure, monomer. It depends on [4Fe-4S] cluster as a cofactor.

The protein resides in the cytoplasm. The catalysed reaction is N(6)-dimethylallyladenosine(37) in tRNA + (sulfur carrier)-SH + AH2 + 2 S-adenosyl-L-methionine = 2-methylsulfanyl-N(6)-dimethylallyladenosine(37) in tRNA + (sulfur carrier)-H + 5'-deoxyadenosine + L-methionine + A + S-adenosyl-L-homocysteine + 2 H(+). Its function is as follows. Catalyzes the methylthiolation of N6-(dimethylallyl)adenosine (i(6)A), leading to the formation of 2-methylthio-N6-(dimethylallyl)adenosine (ms(2)i(6)A) at position 37 in tRNAs that read codons beginning with uridine. This chain is tRNA-2-methylthio-N(6)-dimethylallyladenosine synthase, found in Chlorobium limicola (strain DSM 245 / NBRC 103803 / 6330).